A 226-amino-acid polypeptide reads, in one-letter code: Transcription factor bHLH115 (226 aa).

In terms of domain architecture, bHLH spans 66–117; it reads TGSNSKACREKQRRDRLNDKFTELSSVLEPGRTPKTDKVAIINDAIRMVNQA.

In terms of assembly, homodimer. Interacts with BTS and BHLH47/PYE.

It localises to the nucleus. This is Transcription factor bHLH115 (BHLH115) from Arabidopsis thaliana (Mouse-ear cress).